Reading from the N-terminus, the 155-residue chain is Mediator of RNA polymerase II transcription subunit 21 (155 aa).

The segment at 29-73 (QAPPSVPPGQHRVDTMPEIKGKAASENPQSNPPQPAEPPVPEKIS) is disordered. Residues 39-51 (HRVDTMPEIKGKA) are compositionally biased toward basic and acidic residues. Over residues 58 to 69 (SNPPQPAEPPVP) the composition is skewed to pro residues. Residues 75-147 (EQFNQDLKEF…EVLLKKVEDK (73 aa)) are a coiled coil.

This sequence belongs to the Mediator complex subunit 21 family. In terms of assembly, component of the Mediator complex.

It localises to the nucleus. Functionally, component of the Mediator complex, a coactivator involved in the regulated transcription of nearly all RNA polymerase II-dependent genes. Mediator functions as a bridge to convey information from gene-specific regulatory proteins to the basal RNA polymerase II transcription machinery. Mediator is recruited to promoters by direct interactions with regulatory proteins and serves as a scaffold for the assembly of a functional preinitiation complex with RNA polymerase II and the general transcription factors. The polypeptide is Mediator of RNA polymerase II transcription subunit 21 (SRB7) (Phaeosphaeria nodorum (strain SN15 / ATCC MYA-4574 / FGSC 10173) (Glume blotch fungus)).